The sequence spans 314 residues: Mitochondrial RNA-splicing protein MRS3 (314 aa).

Solcar repeat units follow at residues Ala31–Asn118, His128–Phe210, and Tyr217–Phe310. The next 6 helical transmembrane spans lie at Leu33 to Phe52, Gly93 to Tyr112, Pro130 to Asn149, Ser185 to Tyr204, Pro219 to Thr238, and Gly285 to Ala298.

Belongs to the mitochondrial carrier (TC 2.A.29) family.

It is found in the mitochondrion inner membrane. Its function is as follows. MRS3 suppresses a mitochondrial splice defect in the first intron of the COB gene. It may act as a carrier, exerting its suppressor activity via modulation of solute concentrations in the mitochondrion (possibly of cations). In Saccharomyces cerevisiae (strain ATCC 204508 / S288c) (Baker's yeast), this protein is Mitochondrial RNA-splicing protein MRS3 (MRS3).